A 141-amino-acid polypeptide reads, in one-letter code: Transcription antitermination protein NusB (141 aa).

It belongs to the NusB family.

Functionally, involved in transcription antitermination. Required for transcription of ribosomal RNA (rRNA) genes. Binds specifically to the boxA antiterminator sequence of the ribosomal RNA (rrn) operons. The protein is Transcription antitermination protein NusB of Clostridium botulinum (strain Loch Maree / Type A3).